The sequence spans 212 residues: MKIRLSITIILLSYTVATVAGQQCGRQGGGRTCPGNICCSQYGYCGTTADYCSPTNNCQSNCWGSGPSGPGESASNVRATYHFYNPAQNNWDLRAVSAYCSTWDADKPYAWRSKYGWTAFCGPAGPRGQASCGKCLRVKNTRTNAAVTVRIVDQCSNGGLDLDVAMFNQIDTDGFGYQQGHLIVDYQFVDCGNELIGQPDSRNMLVSAIDRV.

The first 21 residues, 1-21, serve as a signal peptide directing secretion; that stretch reads MKIRLSITIILLSYTVATVAG. The Chitin-binding type-1 domain maps to 22–64; sequence QQCGRQGGGRTCPGNICCSQYGYCGTTADYCSPTNNCQSNCWG. Cystine bridges form between Cys24/Cys39, Cys33/Cys45, Cys38/Cys52, Cys58/Cys62, Cys100/Cys132, Cys121/Cys155, and Cys135/Cys191. A Barwin domain is found at 72–193; the sequence is ESASNVRATY…VDYQFVDCGN (122 aa).

As to quaternary structure, CB-HEL interacts strongly with a fungal fruiting body lectin.

The protein localises to the vacuole. In terms of biological role, fungal growth inhibitors. Neither CB-HEL nor CD-HEL have chitinase activity, but both have antimicrobial activities. CD-HEL has RNase, but no DNase activity. The protein is Hevein-like preproprotein (HEL) of Arabidopsis thaliana (Mouse-ear cress).